Here is a 303-residue protein sequence, read N- to C-terminus: Oxygen-dependent coproporphyrinogen-III oxidase (303 aa).

A substrate-binding site is contributed by Ser93. The a divalent metal cation site is built by His97 and His107. His107 (proton donor) is an active-site residue. Position 109-111 (109-111 (NVR)) interacts with substrate. A divalent metal cation-binding residues include His149 and His179. An important for dimerization region spans residues 244-279 (YVEFNLVFDRGTLFGLQSGGRTESILLSMPPLAQWR). 262–264 (GGR) serves as a coordination point for substrate.

The protein belongs to the aerobic coproporphyrinogen-III oxidase family. As to quaternary structure, homodimer. The cofactor is a divalent metal cation.

The protein localises to the cytoplasm. It catalyses the reaction coproporphyrinogen III + O2 + 2 H(+) = protoporphyrinogen IX + 2 CO2 + 2 H2O. The protein operates within porphyrin-containing compound metabolism; protoporphyrin-IX biosynthesis; protoporphyrinogen-IX from coproporphyrinogen-III (O2 route): step 1/1. Functionally, involved in the heme biosynthesis. Catalyzes the aerobic oxidative decarboxylation of propionate groups of rings A and B of coproporphyrinogen-III to yield the vinyl groups in protoporphyrinogen-IX. The sequence is that of Oxygen-dependent coproporphyrinogen-III oxidase from Bordetella parapertussis (strain 12822 / ATCC BAA-587 / NCTC 13253).